We begin with the raw amino-acid sequence, 366 residues long: GTP cyclohydrolase 1 type 2 homolog (366 aa).

5 residues coordinate Zn(2+): His-64, His-65, Asp-102, His-326, and Glu-329.

This sequence belongs to the GTP cyclohydrolase I type 2/NIF3 family. Toroid-shaped homohexamer that has a central cavity of about 38 Angstroms diameter.

The protein is GTP cyclohydrolase 1 type 2 homolog of Staphylococcus aureus (strain Mu50 / ATCC 700699).